We begin with the raw amino-acid sequence, 218 residues long: Trichothecene biosynthesis transcription regulator TRI6 (218 aa).

Positions 154–181 (SQSTNDPGDAGKKGFATRKDRARHEAKH) are disordered. The segment covering 162-176 (DAGKKGFATRKDRAR) has biased composition (basic and acidic residues). The C2H2-type zinc finger occupies 185-215 (IRCQWRDNNGDQCTRTFSRMDNMRDHFRRIH).

The protein localises to the nucleus. Its function is as follows. Transcriptional activator of part of the trichothecene biosynthesis cluster that mediates the production of the antimicrobial trichothecene harzianum A (HA) that plays a role in Botrytis cinerea antagonistic activity and plant defense priming. Regulates expression of both trichothecene and mevalonate pathway genes. The sequence is that of Trichothecene biosynthesis transcription regulator TRI6 from Trichoderma arundinaceum.